Here is a 156-residue protein sequence, read N- to C-terminus: MARKRNENSLAENRKARHDYFVEEAMEAGLVLVGTEVKSIRNGRVNLKDCYADIYNGEIFVKNMHISPYEQGNIFNVDPLRERKLLLHRDEIRRLDGLVSRDGYTLIPLSLYLKDGKVKVALGVCKGKKNYDKRDSMLEKAHKRDMDRAIKEKNKY.

This sequence belongs to the SmpB family.

The protein resides in the cytoplasm. Required for rescue of stalled ribosomes mediated by trans-translation. Binds to transfer-messenger RNA (tmRNA), required for stable association of tmRNA with ribosomes. tmRNA and SmpB together mimic tRNA shape, replacing the anticodon stem-loop with SmpB. tmRNA is encoded by the ssrA gene; the 2 termini fold to resemble tRNA(Ala) and it encodes a 'tag peptide', a short internal open reading frame. During trans-translation Ala-aminoacylated tmRNA acts like a tRNA, entering the A-site of stalled ribosomes, displacing the stalled mRNA. The ribosome then switches to translate the ORF on the tmRNA; the nascent peptide is terminated with the 'tag peptide' encoded by the tmRNA and targeted for degradation. The ribosome is freed to recommence translation, which seems to be the essential function of trans-translation. In Clostridium beijerinckii (strain ATCC 51743 / NCIMB 8052) (Clostridium acetobutylicum), this protein is SsrA-binding protein.